The following is a 43-amino-acid chain: Protein PsbN (43 aa).

Residues 5 to 27 (TLVAIFISGSLVSFTGYALYTAF) form a helical membrane-spanning segment.

It belongs to the PsbN family.

The protein resides in the plastid. The protein localises to the chloroplast thylakoid membrane. Its function is as follows. May play a role in photosystem I and II biogenesis. This is Protein PsbN from Nelumbo lutea (American lotus).